A 237-amino-acid polypeptide reads, in one-letter code: tRNA1(Val) (adenine(37)-N6)-methyltransferase (237 aa).

The protein belongs to the methyltransferase superfamily. tRNA (adenine-N(6)-)-methyltransferase family.

The protein localises to the cytoplasm. It carries out the reaction adenosine(37) in tRNA1(Val) + S-adenosyl-L-methionine = N(6)-methyladenosine(37) in tRNA1(Val) + S-adenosyl-L-homocysteine + H(+). Its function is as follows. Specifically methylates the adenine in position 37 of tRNA(1)(Val) (anticodon cmo5UAC). The protein is tRNA1(Val) (adenine(37)-N6)-methyltransferase of Bacteroides thetaiotaomicron (strain ATCC 29148 / DSM 2079 / JCM 5827 / CCUG 10774 / NCTC 10582 / VPI-5482 / E50).